A 184-amino-acid polypeptide reads, in one-letter code: NADH-quinone oxidoreductase subunit B (184 aa).

Positions 37, 38, 103, and 132 each coordinate [4Fe-4S] cluster.

It belongs to the complex I 20 kDa subunit family. NDH-1 is composed of 14 different subunits. Subunits NuoB, C, D, E, F, and G constitute the peripheral sector of the complex. [4Fe-4S] cluster serves as cofactor.

It is found in the cell membrane. It carries out the reaction a quinone + NADH + 5 H(+)(in) = a quinol + NAD(+) + 4 H(+)(out). In terms of biological role, NDH-1 shuttles electrons from NADH, via FMN and iron-sulfur (Fe-S) centers, to quinones in the respiratory chain. The immediate electron acceptor for the enzyme in this species is believed to be a menaquinone. Couples the redox reaction to proton translocation (for every two electrons transferred, four hydrogen ions are translocated across the cytoplasmic membrane), and thus conserves the redox energy in a proton gradient. The sequence is that of NADH-quinone oxidoreductase subunit B from Mycolicibacterium vanbaalenii (strain DSM 7251 / JCM 13017 / BCRC 16820 / KCTC 9966 / NRRL B-24157 / PYR-1) (Mycobacterium vanbaalenii).